The following is a 314-amino-acid chain: Ferrochelatase (314 aa).

H188 and E269 together coordinate Fe cation.

Belongs to the ferrochelatase family.

It is found in the cytoplasm. It catalyses the reaction heme b + 2 H(+) = protoporphyrin IX + Fe(2+). Its pathway is porphyrin-containing compound metabolism; protoheme biosynthesis; protoheme from protoporphyrin-IX: step 1/1. Catalyzes the ferrous insertion into protoporphyrin IX. The sequence is that of Ferrochelatase from Campylobacter fetus subsp. fetus (strain 82-40).